We begin with the raw amino-acid sequence, 226 residues long: Cytidylate kinase (226 aa).

An ATP-binding site is contributed by 11–19; the sequence is GPASAGKST.

This sequence belongs to the cytidylate kinase family. Type 1 subfamily.

It is found in the cytoplasm. It catalyses the reaction CMP + ATP = CDP + ADP. The enzyme catalyses dCMP + ATP = dCDP + ADP. This Limosilactobacillus fermentum (strain NBRC 3956 / LMG 18251) (Lactobacillus fermentum) protein is Cytidylate kinase.